The following is a 243-amino-acid chain: Putative C-type lectin protein A7 (243 aa).

The chain crosses the membrane as a helical span at residues 23–43; that stretch reads IFFILAATNLMIAAFALGCLA. Residues 116–223 enclose the C-type lectin domain; that stretch reads GQKACYYVPP…CTTSKLCLCG (108 aa). Cystine bridges form between cysteine 137–cysteine 222 and cysteine 198–cysteine 214.

The protein resides in the host membrane. In Alcelaphine herpesvirus 1 (strain C500) (AlHV-1), this protein is Putative C-type lectin protein A7 (A7).